Reading from the N-terminus, the 92-residue chain is Small ribosomal subunit protein uS19 (92 aa).

This sequence belongs to the universal ribosomal protein uS19 family.

Its function is as follows. Protein S19 forms a complex with S13 that binds strongly to the 16S ribosomal RNA. The protein is Small ribosomal subunit protein uS19 of Shigella boydii serotype 18 (strain CDC 3083-94 / BS512).